The chain runs to 374 residues: NADH-quinone oxidoreductase subunit D 1 (374 aa).

Belongs to the complex I 49 kDa subunit family. In terms of assembly, NDH-1 is composed of 14 different subunits. Subunits NuoB, C, D, E, F, and G constitute the peripheral sector of the complex.

The protein localises to the cell membrane. It carries out the reaction a quinone + NADH + 5 H(+)(in) = a quinol + NAD(+) + 4 H(+)(out). Its function is as follows. NDH-1 shuttles electrons from NADH, via FMN and iron-sulfur (Fe-S) centers, to quinones in the respiratory chain. The immediate electron acceptor for the enzyme in this species is believed to be ubiquinone. Couples the redox reaction to proton translocation (for every two electrons transferred, four hydrogen ions are translocated across the cytoplasmic membrane), and thus conserves the redox energy in a proton gradient. This chain is NADH-quinone oxidoreductase subunit D 1, found in Roseiflexus sp. (strain RS-1).